The sequence spans 304 residues: Recombination-associated protein RdgC (304 aa).

The protein belongs to the RdgC family.

The protein localises to the cytoplasm. Its subcellular location is the nucleoid. Functionally, may be involved in recombination. This Shewanella sp. (strain ANA-3) protein is Recombination-associated protein RdgC.